The sequence spans 180 residues: Large ribosomal subunit protein uL5 (180 aa).

Belongs to the universal ribosomal protein uL5 family. Part of the 50S ribosomal subunit; part of the 5S rRNA/L5/L18/L25 subcomplex. Contacts the 5S rRNA and the P site tRNA. Forms a bridge to the 30S subunit in the 70S ribosome.

Its function is as follows. This is one of the proteins that bind and probably mediate the attachment of the 5S RNA into the large ribosomal subunit, where it forms part of the central protuberance. In the 70S ribosome it contacts protein S13 of the 30S subunit (bridge B1b), connecting the 2 subunits; this bridge is implicated in subunit movement. Contacts the P site tRNA; the 5S rRNA and some of its associated proteins might help stabilize positioning of ribosome-bound tRNAs. This is Large ribosomal subunit protein uL5 from Limosilactobacillus fermentum (strain NBRC 3956 / LMG 18251) (Lactobacillus fermentum).